Reading from the N-terminus, the 134-residue chain is Small ribosomal subunit protein bS6 (134 aa).

Residues 103–134 form a disordered region; it reads AAPVKSAEEGTEEVAAEAATEAPAETTTTVEV. Positions 118–134 are enriched in low complexity; sequence AEAATEAPAETTTTVEV.

The protein belongs to the bacterial ribosomal protein bS6 family.

Functionally, binds together with bS18 to 16S ribosomal RNA. The chain is Small ribosomal subunit protein bS6 from Geobacter sp. (strain M21).